A 292-amino-acid chain; its full sequence is Chronophin (292 aa).

Catalysis depends on Asp25, which acts as the Nucleophile. The Mg(2+) site is built by Asp25 and Asp27. Asp27 acts as the Proton donor in catalysis. Substrate-binding positions include 58–60 (SNN), His178, and Lys209. Asp234 serves as a coordination point for Mg(2+).

It belongs to the HAD-like hydrolase superfamily. Homodimer. Mg(2+) serves as cofactor. In terms of tissue distribution, ubiquitous. highly expressed in brain (at protein level).

It is found in the cytoplasm. Its subcellular location is the cytosol. The protein resides in the cytoskeleton. It localises to the cell projection. The protein localises to the ruffle membrane. It is found in the lamellipodium membrane. Its subcellular location is the cell membrane. It catalyses the reaction pyridoxal 5'-phosphate + H2O = pyridoxal + phosphate. The enzyme catalyses pyridoxine 5'-phosphate + H2O = pyridoxine + phosphate. The catalysed reaction is pyridoxamine + phosphate = pyridoxamine 5'-phosphate + H2O. It carries out the reaction O-phospho-L-seryl-[protein] + H2O = L-seryl-[protein] + phosphate. Its activity is regulated as follows. Inhibited by beryllium trifluoride. In terms of biological role, functions as a pyridoxal phosphate (PLP) phosphatase, which also catalyzes the dephosphorylation of pyridoxine 5'-phosphate (PNP) and pyridoxamine 5'-phosphate (PMP), with order of substrate preference PLP &gt; PNP &gt; PMP and therefore plays a role in vitamin B6 metabolism. Also functions as a protein serine phosphatase that specifically dephosphorylates 'Ser-3' in proteins of the actin-depolymerizing factor (ADF)/cofilin family like CFL1 and DSTN. Thereby, regulates cofilin-dependent actin cytoskeleton reorganization, being required for normal progress through mitosis and normal cytokinesis. Does not dephosphorylate phosphothreonines in LIMK1. Does not dephosphorylate peptides containing phosphotyrosine. This Mus musculus (Mouse) protein is Chronophin.